The primary structure comprises 302 residues: MNVTPKDLLDAGVHFGHQTKRWNPRSKPFVFDHRQGISIIDLGKTHAALEKACTFLEDTVGNGGNVLFVGTKRQAKDIIREAATSTNMPFCVDRWLGGTLTNYETVKRSIAKYKKYQQMETSGDMNKLASKEVAAIKREMVRMQKNFSGIVDMPGLPTAMFVVDVNHEKIAVAEAARSGIPCVGICDTNSDPSTLSHPIPGNDDAVKSIRIIVEAIVAAVQNGLSQRDARRAARGAADLKAAAAAAAGITGETAATPEVDLSKVELPADVAAVVEGEGESEAEPVVAKKKPVRAKRPAVKAE.

Residues 275-302 (EGEGESEAEPVVAKKKPVRAKRPAVKAE) are disordered. The span at 287 to 302 (AKKKPVRAKRPAVKAE) shows a compositional bias: basic residues.

This sequence belongs to the universal ribosomal protein uS2 family.

This is Small ribosomal subunit protein uS2 from Opitutus terrae (strain DSM 11246 / JCM 15787 / PB90-1).